Consider the following 167-residue polypeptide: uncharacterized protein (167 aa).

The segment at 95–114 is disordered; that stretch reads AHSLHHQSHQSDVQVHAKGN.

This is an uncharacterized protein from Haemophilus influenzae (Bacteriophage HP1).